Consider the following 424-residue polypeptide: Bone morphogenetic protein 10 (424 aa).

Residues 1–21 (MGSLVLTLCALFCLAAYLVSG) form the signal peptide. Positions 22–316 (SPIMNLEQSP…IYDSTARIRR (295 aa)) are excised as a propeptide. N-linked (GlcNAc...) asparagine glycans are attached at residues N67 and N131. 3 disulfide bridges follow: C323/C389, C352/C421, and C356/C423.

Belongs to the TGF-beta family. In terms of assembly, homodimer; disulfide-linked. Interacts with FBN1 (via N-terminal domain) and FBN2. Interacts with ENG. Detected in mammary epithelia (at protein level).

The protein localises to the secreted. In terms of biological role, required for maintaining the proliferative activity of embryonic cardiomyocytes by preventing premature activation of the negative cell cycle regulator CDKN1C/p57KIP and maintaining the required expression levels of cardiogenic factors such as MEF2C and NKX2-5. Acts as a ligand for ACVRL1/ALK1, BMPR1A/ALK3 and BMPR1B/ALK6, leading to activation of SMAD1, SMAD5 and SMAD8 transcription factors. Inhibits endothelial cell migration and growth. May reduce cell migration and cell matrix adhesion in breast cancer cell lines. This chain is Bone morphogenetic protein 10 (BMP10), found in Homo sapiens (Human).